The primary structure comprises 186 residues: ATP-dependent protease subunit HslV (186 aa).

Residue Thr-14 is part of the active site. Positions 168, 171, and 174 each coordinate Na(+).

The protein belongs to the peptidase T1B family. HslV subfamily. A double ring-shaped homohexamer of HslV is capped on each side by a ring-shaped HslU homohexamer. The assembly of the HslU/HslV complex is dependent on binding of ATP.

The protein resides in the cytoplasm. The catalysed reaction is ATP-dependent cleavage of peptide bonds with broad specificity.. With respect to regulation, allosterically activated by HslU binding. Functionally, protease subunit of a proteasome-like degradation complex believed to be a general protein degrading machinery. The chain is ATP-dependent protease subunit HslV from Methylorubrum extorquens (strain CM4 / NCIMB 13688) (Methylobacterium extorquens).